The primary structure comprises 769 residues: Ligand-dependent nuclear receptor-interacting factor 1 (769 aa).

Residues Lys259 and Lys279 each participate in a glycyl lysine isopeptide (Lys-Gly) (interchain with G-Cter in SUMO2) cross-link. Residues 378-387 (QIDQQNSVSP) show a composition bias toward polar residues. The disordered stretch occupies residues 378–400 (QIDQQNSVSPDTPVRKDTLQTVS). Phosphoserine occurs at positions 402, 430, and 436. Lys446 is covalently cross-linked (Glycyl lysine isopeptide (Lys-Gly) (interchain with G-Cter in SUMO2)). Ser502 carries the phosphoserine modification. The segment at 528-562 (DQEPKIHNEMASTSDKGAQGRNDKKDSQGRSNKAL) is disordered. The PxVxL motif signature appears at 580-584 (LRVCL). Residue Ser599 is modified to Phosphoserine. Lys605 is covalently cross-linked (Glycyl lysine isopeptide (Lys-Gly) (interchain with G-Cter in SUMO2)). Short sequence motifs (nuclear localization signal) lie at residues 628 to 631 (KKRK) and 642 to 645 (KKRK). Lys702 participates in a covalent cross-link: Glycyl lysine isopeptide (Lys-Gly) (interchain with G-Cter in SUMO2). Residue Thr732 is modified to Phosphothreonine. A coiled-coil region spans residues 740 to 769 (IRDEKIRRLKQVLREKEAALEEMRKKMHQK).

It belongs to the LRIF1 family. In terms of assembly, interacts with RARA. Interacts with SMCHD1; leading to recruitment to inactivated chromosome X in females. Interacts (via PxVxL motif) with HP1 (CBX1/HP1-beta, CBX3/HP1-gamma and CBX5/HP1-alpha). As to expression, widely expressed, with the highest expression levels in heart, liver and placenta.

Its subcellular location is the chromosome. The protein localises to the nucleus matrix. Functionally, together with SMCHD1, involved in chromosome X inactivation in females by promoting the compaction of heterochromatin. Also able to repress the ligand-induced transcriptional activity of retinoic acid receptor alpha (RARA), possibly through direct recruitment of histone deacetylases. Also required for silencing of the DUX4 locus in somatic cells. In Homo sapiens (Human), this protein is Ligand-dependent nuclear receptor-interacting factor 1.